The primary structure comprises 90 residues: Small ribosomal subunit protein uS15 (90 aa).

Belongs to the universal ribosomal protein uS15 family. As to quaternary structure, part of the 30S ribosomal subunit. Forms a bridge to the 50S subunit in the 70S ribosome, contacting the 23S rRNA.

Functionally, one of the primary rRNA binding proteins, it binds directly to 16S rRNA where it helps nucleate assembly of the platform of the 30S subunit by binding and bridging several RNA helices of the 16S rRNA. In terms of biological role, forms an intersubunit bridge (bridge B4) with the 23S rRNA of the 50S subunit in the ribosome. The protein is Small ribosomal subunit protein uS15 of Campylobacter lari (strain RM2100 / D67 / ATCC BAA-1060).